A 333-amino-acid polypeptide reads, in one-letter code: L-lactate dehydrogenase B chain (333 aa).

Residues 29 to 57 (GQVG…LEDK) and Arg99 contribute to the NAD(+) site. The substrate site is built by Arg106, Asn138, and Arg169. Asn138 provides a ligand contact to NAD(+). Catalysis depends on His193, which acts as the Proton acceptor. Thr248 is a substrate binding site.

It belongs to the LDH/MDH superfamily. LDH family. As to quaternary structure, homotetramer.

Its subcellular location is the cytoplasm. The enzyme catalyses (S)-lactate + NAD(+) = pyruvate + NADH + H(+). The protein operates within fermentation; pyruvate fermentation to lactate; (S)-lactate from pyruvate: step 1/1. In terms of biological role, interconverts simultaneously and stereospecifically pyruvate and lactate with concomitant interconversion of NADH and NAD(+). The polypeptide is L-lactate dehydrogenase B chain (LDHB) (Anas platyrhynchos (Mallard)).